A 160-amino-acid polypeptide reads, in one-letter code: Transcription elongation factor GreA (160 aa).

The stretch at 14–76 (VKKLEEELEY…QLENMLKNAS (63 aa)) forms a coiled coil.

It belongs to the GreA/GreB family.

Its function is as follows. Necessary for efficient RNA polymerase transcription elongation past template-encoded arresting sites. The arresting sites in DNA have the property of trapping a certain fraction of elongating RNA polymerases that pass through, resulting in locked ternary complexes. Cleavage of the nascent transcript by cleavage factors such as GreA or GreB allows the resumption of elongation from the new 3'terminus. GreA releases sequences of 2 to 3 nucleotides. The protein is Transcription elongation factor GreA of Clostridium botulinum (strain Okra / Type B1).